The following is a 375-amino-acid chain: MQCALYDAGRCRSCQWITQPIPEQLSAKTADLKNLLADFPVEEWCAPVSGPEQGFRNKAKMVVSGSVEKPLLGMLHRDGTPEDLCDCPLYPASFAPVFAALKPFIARAGLTPYNVARKRGELKYILLTESQSDGGMMLRFVLRSDTKLAQLRKALPWLQEQLPQLKVITVNIQPVHMAIMEGETEIYLTEQQALAERFNDVPLWIRPQSFFQTNPAVASQLYATARDWVRQLPVKHMWDLFCGVGGFGLHCATPDMQLTGIEIAPEAIACAKQSAAELGLTRLQFQALDSTQFATAQGEVPELVLVNPPRRGIGKPLCDYLSTMAPRFIIYSSCNAQTMAKDIRELPGYRIERVQLFDMFPHTAHYEVLTLLVQQ.

Residues cysteine 3, cysteine 11, cysteine 14, and cysteine 87 each coordinate [4Fe-4S] cluster. Residues glutamine 212, phenylalanine 241, glutamate 262, and asparagine 307 each contribute to the S-adenosyl-L-methionine site. Catalysis depends on cysteine 334, which acts as the Nucleophile.

Belongs to the class I-like SAM-binding methyltransferase superfamily. RNA M5U methyltransferase family. RlmC subfamily.

It catalyses the reaction uridine(747) in 23S rRNA + S-adenosyl-L-methionine = 5-methyluridine(747) in 23S rRNA + S-adenosyl-L-homocysteine + H(+). Catalyzes the formation of 5-methyl-uridine at position 747 (m5U747) in 23S rRNA. The polypeptide is 23S rRNA (uracil(747)-C(5))-methyltransferase RlmC (Escherichia coli O6:H1 (strain CFT073 / ATCC 700928 / UPEC)).